The chain runs to 119 residues: Holo-[acyl-carrier-protein] synthase (119 aa).

Positions 8 and 60 each coordinate Mg(2+).

Belongs to the P-Pant transferase superfamily. AcpS family. Mg(2+) is required as a cofactor.

It is found in the cytoplasm. It catalyses the reaction apo-[ACP] + CoA = holo-[ACP] + adenosine 3',5'-bisphosphate + H(+). Its function is as follows. Transfers the 4'-phosphopantetheine moiety from coenzyme A to a Ser of acyl-carrier-protein. This Staphylococcus haemolyticus (strain JCSC1435) protein is Holo-[acyl-carrier-protein] synthase.